Here is a 103-residue protein sequence, read N- to C-terminus: Gene 56 protein (103 aa).

Residues Trp9–Leu103 enclose the Glutaredoxin domain.

This chain is Gene 56 protein (56), found in Mycobacterium phage L5 (Mycobacteriophage L5).